Consider the following 406-residue polypeptide: Uronyl 2-sulfotransferase (406 aa).

Topologically, residues 1–49 (MKKKQQHPGGGADPWPHGAPMGGAPPGLGSWKRRVPLLPFLRFSLRDYG) are cytoplasmic. A helical; Signal-anchor for type II membrane protein membrane pass occupies residues 50–70 (FCMATLLVFCLGSLLYQLSGG). Residues 71-406 (PPRFLLDLRQ…EKWLEDIYKR (336 aa)) are Lumenal-facing. N-linked (GlcNAc...) asparagine glycosylation is found at Asn-84, Asn-140, and Asn-155. Residue His-168 is part of the active site. Asn-173 and Asn-319 each carry an N-linked (GlcNAc...) asparagine glycan. Residues 387 to 399 (EPIDDEEQDDEKW) show a composition bias toward acidic residues. The segment at 387–406 (EPIDDEEQDDEKWLEDIYKR) is disordered.

The protein belongs to the sulfotransferase 3 family. As to expression, widely expressed.

It localises to the golgi apparatus membrane. Sulfotransferase that catalyzes the transfer of sulfate to the position 2 of uronyl residues in glycosaminoglycan chains. Has mainly activity toward iduronyl residues in dermatan sulfate, and weaker activity toward glucuronyl residues of chondroitin sulfate. Has little to no activity toward desulfated N-resulfated heparin or N-sulfoheparosan. This Homo sapiens (Human) protein is Uronyl 2-sulfotransferase.